Consider the following 99-residue polypeptide: Large ribosomal subunit protein bL21 (99 aa).

The protein belongs to the bacterial ribosomal protein bL21 family. As to quaternary structure, part of the 50S ribosomal subunit. Contacts protein L20.

Functionally, this protein binds to 23S rRNA in the presence of protein L20. The protein is Large ribosomal subunit protein bL21 of Acholeplasma laidlawii (strain PG-8A).